We begin with the raw amino-acid sequence, 546 residues long: Alkaline phosphatase PafA (546 aa).

The N-terminal stretch at 1-25 (MLTPKKWLLGVLVVSGMLGAQKTNA) is a signal peptide. 2 residues coordinate Zn(2+): Asp-38 and Thr-79. The active-site Phosphothreonine intermediate is the Thr-79. Substrate contacts are provided by residues Asn-100 and 162-164 (KDR). Residues Asp-305, His-309, Asp-352, His-353, and His-486 each coordinate Zn(2+).

Zn(2+) is required as a cofactor.

The protein localises to the periplasm. The catalysed reaction is a phosphate monoester + H2O = an alcohol + phosphate. With respect to regulation, strongly inhibited by orthovanadate and EDTA. Also inhibited by inorganic phosphate. Its function is as follows. Alkaline phosphatase with broad substrate specificity. Has phosphatase activity towards nucleotide phosphates with a preference for ATP. Active towards a great variety of phosphomonoesters with the exception of 2',3'-cyclic AMP and myo-inositol hexakisphosphate. The sequence is that of Alkaline phosphatase PafA from Elizabethkingia meningoseptica (Chryseobacterium meningosepticum).